The chain runs to 171 residues: ATP synthase subunit b (171 aa).

Residues 2–22 (FVVKMVLGFLILLSPLCATGL) form a helical membrane-spanning segment.

The protein belongs to the ATPase B chain family. In terms of assembly, F-type ATPases have 2 components, F(1) - the catalytic core - and F(0) - the membrane proton channel. F(1) has five subunits: alpha(3), beta(3), gamma(1), delta(1), epsilon(1). F(0) has three main subunits: a(1), b(2) and c(10-14). The alpha and beta chains form an alternating ring which encloses part of the gamma chain. F(1) is attached to F(0) by a central stalk formed by the gamma and epsilon chains, while a peripheral stalk is formed by the delta and b chains.

The protein localises to the cell inner membrane. Its function is as follows. F(1)F(0) ATP synthase produces ATP from ADP in the presence of a proton or sodium gradient. F-type ATPases consist of two structural domains, F(1) containing the extramembraneous catalytic core and F(0) containing the membrane proton channel, linked together by a central stalk and a peripheral stalk. During catalysis, ATP synthesis in the catalytic domain of F(1) is coupled via a rotary mechanism of the central stalk subunits to proton translocation. Functionally, component of the F(0) channel, it forms part of the peripheral stalk, linking F(1) to F(0). This chain is ATP synthase subunit b, found in Helicobacter pylori (strain J99 / ATCC 700824) (Campylobacter pylori J99).